The chain runs to 408 residues: Na(+)-translocating NADH-quinone reductase subunit F (408 aa).

Residues V4 to F24 form a helical membrane-spanning segment. The 2Fe-2S ferredoxin-type domain occupies G33–I127. Residues C70, C76, C79, and C111 each coordinate [2Fe-2S] cluster. Residues I130 to K270 enclose the FAD-binding FR-type domain.

It belongs to the NqrF family. In terms of assembly, composed of six subunits; NqrA, NqrB, NqrC, NqrD, NqrE and NqrF. The cofactor is [2Fe-2S] cluster. FAD serves as cofactor.

It is found in the cell inner membrane. It carries out the reaction a ubiquinone + n Na(+)(in) + NADH + H(+) = a ubiquinol + n Na(+)(out) + NAD(+). NQR complex catalyzes the reduction of ubiquinone-1 to ubiquinol by two successive reactions, coupled with the transport of Na(+) ions from the cytoplasm to the periplasm. The first step is catalyzed by NqrF, which accepts electrons from NADH and reduces ubiquinone-1 to ubisemiquinone by a one-electron transfer pathway. The polypeptide is Na(+)-translocating NADH-quinone reductase subunit F (Shewanella denitrificans (strain OS217 / ATCC BAA-1090 / DSM 15013)).